Reading from the N-terminus, the 283-residue chain is Pantothenate synthetase (283 aa).

Residue 30–37 (MGNLHDGH) participates in ATP binding. His-37 acts as the Proton donor in catalysis. Residue Gln-61 coordinates (R)-pantoate. Beta-alanine is bound at residue Gln-61. 149-152 (GEKD) contacts ATP. Position 155 (Gln-155) interacts with (R)-pantoate. ATP contacts are provided by residues Val-178 and 186–189 (LSSR).

The protein belongs to the pantothenate synthetase family. As to quaternary structure, homodimer.

The protein localises to the cytoplasm. It carries out the reaction (R)-pantoate + beta-alanine + ATP = (R)-pantothenate + AMP + diphosphate + H(+). Its pathway is cofactor biosynthesis; (R)-pantothenate biosynthesis; (R)-pantothenate from (R)-pantoate and beta-alanine: step 1/1. Its function is as follows. Catalyzes the condensation of pantoate with beta-alanine in an ATP-dependent reaction via a pantoyl-adenylate intermediate. This is Pantothenate synthetase from Salmonella arizonae (strain ATCC BAA-731 / CDC346-86 / RSK2980).